The sequence spans 156 residues: Small ribosomal subunit protein uS7 (156 aa).

The protein belongs to the universal ribosomal protein uS7 family. As to quaternary structure, part of the 30S ribosomal subunit. Contacts proteins S9 and S11.

In terms of biological role, one of the primary rRNA binding proteins, it binds directly to 16S rRNA where it nucleates assembly of the head domain of the 30S subunit. Is located at the subunit interface close to the decoding center, probably blocks exit of the E-site tRNA. This chain is Small ribosomal subunit protein uS7, found in Nitrosococcus oceani (strain ATCC 19707 / BCRC 17464 / JCM 30415 / NCIMB 11848 / C-107).